Consider the following 547-residue polypeptide: Chaperonin GroEL (547 aa).

ATP contacts are provided by residues 30 to 33, Lys-51, 87 to 91, Gly-415, 479 to 481, and Asp-495; these read TLGP, DGTTT, and NAA.

It belongs to the chaperonin (HSP60) family. In terms of assembly, forms a cylinder of 14 subunits composed of two heptameric rings stacked back-to-back. Interacts with the co-chaperonin GroES.

The protein localises to the cytoplasm. It carries out the reaction ATP + H2O + a folded polypeptide = ADP + phosphate + an unfolded polypeptide.. Functionally, together with its co-chaperonin GroES, plays an essential role in assisting protein folding. The GroEL-GroES system forms a nano-cage that allows encapsulation of the non-native substrate proteins and provides a physical environment optimized to promote and accelerate protein folding. This Bordetella bronchiseptica (strain ATCC BAA-588 / NCTC 13252 / RB50) (Alcaligenes bronchisepticus) protein is Chaperonin GroEL.